The primary structure comprises 490 residues: Tryptophan 5-hydroxylase 2 (490 aa).

S19 bears the Phosphoserine mark. Residues 34–62 are disordered; the sequence is LTLNKANSGKNDDKGNKGSSKNETATESG. A compositionally biased stretch (polar residues) spans 50–62; sequence KGSSKNETATESG. Residues 65–140 enclose the ACT domain; sequence AVVFSLKNEV…TIVTLNPPEN (76 aa). Fe cation is bound by residues H318, H323, and E363.

Belongs to the biopterin-dependent aromatic amino acid hydroxylase family. As to quaternary structure, interacts with DNAJC12. Fe(2+) is required as a cofactor.

It catalyses the reaction (6R)-L-erythro-5,6,7,8-tetrahydrobiopterin + L-tryptophan + O2 = 5-hydroxy-L-tryptophan + (4aS,6R)-4a-hydroxy-L-erythro-5,6,7,8-tetrahydrobiopterin. It participates in aromatic compound metabolism; serotonin biosynthesis; serotonin from L-tryptophan: step 1/2. The chain is Tryptophan 5-hydroxylase 2 (TPH2) from Macaca mulatta (Rhesus macaque).